The following is a 466-amino-acid chain: 3-isopropylmalate dehydratase large subunit (466 aa).

Residues cysteine 349, cysteine 410, and cysteine 413 each contribute to the [4Fe-4S] cluster site.

The protein belongs to the aconitase/IPM isomerase family. LeuC type 1 subfamily. Heterodimer of LeuC and LeuD. It depends on [4Fe-4S] cluster as a cofactor.

The enzyme catalyses (2R,3S)-3-isopropylmalate = (2S)-2-isopropylmalate. The protein operates within amino-acid biosynthesis; L-leucine biosynthesis; L-leucine from 3-methyl-2-oxobutanoate: step 2/4. Catalyzes the isomerization between 2-isopropylmalate and 3-isopropylmalate, via the formation of 2-isopropylmaleate. The polypeptide is 3-isopropylmalate dehydratase large subunit (Vesicomyosocius okutanii subsp. Calyptogena okutanii (strain HA)).